Consider the following 258-residue polypeptide: Lipoprotein-releasing system ATP-binding protein LolD (258 aa).

Positions 5 to 244 constitute an ABC transporter domain; sequence LQCCQLSKSY…PTSSITDPAN (240 aa). 41-48 serves as a coordination point for ATP; that stretch reads GSSGCGKS. The interval 222–258 is disordered; the sequence is LRPLSDNSEQALPPTSSITDPANNIKDNEPQANERHV. Residues 226–243 are compositionally biased toward polar residues; it reads SDNSEQALPPTSSITDPA. Basic and acidic residues predominate over residues 247–258; sequence KDNEPQANERHV.

The protein belongs to the ABC transporter superfamily. Lipoprotein translocase (TC 3.A.1.125) family. The complex is composed of two ATP-binding proteins (LolD) and two transmembrane proteins (LolC and LolE).

It localises to the cell inner membrane. Its function is as follows. Part of the ABC transporter complex LolCDE involved in the translocation of mature outer membrane-directed lipoproteins, from the inner membrane to the periplasmic chaperone, LolA. Responsible for the formation of the LolA-lipoprotein complex in an ATP-dependent manner. This is Lipoprotein-releasing system ATP-binding protein LolD from Colwellia psychrerythraea (strain 34H / ATCC BAA-681) (Vibrio psychroerythus).